The sequence spans 155 residues: Ribosome maturation factor RimP (155 aa).

Belongs to the RimP family.

It localises to the cytoplasm. Functionally, required for maturation of 30S ribosomal subunits. This chain is Ribosome maturation factor RimP, found in Macrococcus caseolyticus (strain JCSC5402) (Macrococcoides caseolyticum).